The primary structure comprises 339 residues: Glycerol-3-phosphate dehydrogenase [NAD(P)+] (339 aa).

S15, Y16, H36, and K110 together coordinate NADPH. 3 residues coordinate sn-glycerol 3-phosphate: K110, G139, and T141. A143 provides a ligand contact to NADPH. Residues K195, D248, S258, R259, and N260 each contribute to the sn-glycerol 3-phosphate site. K195 serves as the catalytic Proton acceptor. Position 259 (R259) interacts with NADPH. V283 and E285 together coordinate NADPH.

The protein belongs to the NAD-dependent glycerol-3-phosphate dehydrogenase family.

Its subcellular location is the cytoplasm. The enzyme catalyses sn-glycerol 3-phosphate + NAD(+) = dihydroxyacetone phosphate + NADH + H(+). It carries out the reaction sn-glycerol 3-phosphate + NADP(+) = dihydroxyacetone phosphate + NADPH + H(+). Its pathway is membrane lipid metabolism; glycerophospholipid metabolism. Functionally, catalyzes the reduction of the glycolytic intermediate dihydroxyacetone phosphate (DHAP) to sn-glycerol 3-phosphate (G3P), the key precursor for phospholipid synthesis. This chain is Glycerol-3-phosphate dehydrogenase [NAD(P)+], found in Shigella flexneri serotype 5b (strain 8401).